Consider the following 118-residue polypeptide: MSRPSRLQRQVLSLYRELLRAGRGTPGAEARVRAEFRQHASLPRTDVLRIEYLYRRGRRQLQLLRSGHATAMGTFVRPRGPAEEPGDATAPGTRLDDGGAPKNSCEDTGARETRSDGR.

The LYR motif 1; required for interaction with HSC20 signature appears at 14 to 16 (LYR). The LYR motif 2; not required for interaction with HSC20 signature appears at 53–55 (LYR). An interaction with SDHB region spans residues 53–65 (LYRRGRRQLQLLR). Residues 68–118 (HATAMGTFVRPRGPAEEPGDATAPGTRLDDGGAPKNSCEDTGARETRSDGR) form a disordered region. A compositionally biased stretch (basic and acidic residues) spans 94–118 (RLDDGGAPKNSCEDTGARETRSDGR).

This sequence belongs to the complex I LYR family. SDHAF1 subfamily. In terms of assembly, interacts with SDHB within an SDHA-SDHB subcomplex. Also interacts with the iron-sulfur transfer complex formed by HSC20, HSPA9 and ISCU through direct binding to HSC20. Binding of SDHAF1 to SDHB precedes and is necessary for recruitment of the iron-sulfur transfer complex by SDHAF1.

It is found in the mitochondrion matrix. Functionally, plays an essential role in the assembly of succinate dehydrogenase (SDH), an enzyme complex (also referred to as respiratory complex II) that is a component of both the tricarboxylic acid (TCA) cycle and the mitochondrial electron transport chain, and which couples the oxidation of succinate to fumarate with the reduction of ubiquinone (coenzyme Q) to ubiquinol. Promotes maturation of the iron-sulfur protein subunit Sdhb of the SDH catalytic dimer, protecting it from the deleterious effects of oxidants. May act together with SDHAF3. Contributes to iron-sulfur cluster incorporation into SDHB by binding to SDHB and recruiting the iron-sulfur transfer complex formed by HSC20, HSPA9 and ISCU through direct binding to HSC20. This Mus musculus (Mouse) protein is Succinate dehydrogenase assembly factor 1, mitochondrial.